The chain runs to 94 residues: Large ribosomal subunit protein eL31 (94 aa).

This sequence belongs to the eukaryotic ribosomal protein eL31 family.

The polypeptide is Large ribosomal subunit protein eL31 (rpl31e) (Pyrococcus abyssi (strain GE5 / Orsay)).